A 156-amino-acid chain; its full sequence is MPRRRVVGQRKILPDPKFHSELLAKFINVIMQDGKKSTAEKIIYKALDVVAEKKSENHLVILEAALDNVRPSVEVKSRRVGGSTYQVPCEVRPVRRNALAMRWLVEAARKRGEKSMALRLAGEMLDASENKGTAVKKREDVHRMAEANKAFAHYRW.

The protein belongs to the universal ribosomal protein uS7 family. As to quaternary structure, part of the 30S ribosomal subunit. Contacts proteins S9 and S11.

One of the primary rRNA binding proteins, it binds directly to 16S rRNA where it nucleates assembly of the head domain of the 30S subunit. Is located at the subunit interface close to the decoding center, probably blocks exit of the E-site tRNA. The polypeptide is Small ribosomal subunit protein uS7 (Shewanella sp. (strain W3-18-1)).